Consider the following 324-residue polypeptide: Stomatin-like protein stl-1 (324 aa).

Belongs to the band 7/mec-2 family. In terms of tissue distribution, widely expressed in most tissues, including body wall muscles, intestinal epithelia, and pharynx and head neurons.

Its subcellular location is the mitochondrion. Functionally, mitochondrial protein that probably regulates the biogenesis and the activity of mitochondria. In neurons, involved in mitochondrial fusion and recovery of normal locomotory behavior during reoxygenation; probably acts independently of egl-9 and the canonical hypoxia response pathway. The sequence is that of Stomatin-like protein stl-1 from Caenorhabditis elegans.